A 101-amino-acid polypeptide reads, in one-letter code: uncharacterized protein (101 aa).

The span at 1–11 (MSDEGYRELVE) shows a compositional bias: basic and acidic residues. Residues 1–26 (MSDEGYRELVESKSAPTTPGPWSPDR) are disordered.

This is an uncharacterized protein from Torque teno canis virus (isolate Cf-TTV10).